Reading from the N-terminus, the 414-residue chain is Pre-mRNA-processing protein 45 (414 aa).

Disordered stretches follow at residues 128–159 (ESKR…DTPI) and 264–292 (RSKI…KKIK). A compositionally biased stretch (polar residues) spans 135 to 146 (LQPSRQKNTSSK).

It belongs to the SNW family. In terms of assembly, associated with the spliceosome.

Its subcellular location is the nucleus. Functionally, involved in pre-mRNA splicing. The polypeptide is Pre-mRNA-processing protein 45 (PRP45) (Candida glabrata (strain ATCC 2001 / BCRC 20586 / JCM 3761 / NBRC 0622 / NRRL Y-65 / CBS 138) (Yeast)).